A 360-amino-acid chain; its full sequence is 4-hydroxy-3-methylbut-2-en-1-yl diphosphate synthase (flavodoxin) (360 aa).

Residues Cys265, Cys268, Cys300, and Glu307 each coordinate [4Fe-4S] cluster.

Belongs to the IspG family. [4Fe-4S] cluster serves as cofactor.

It carries out the reaction (2E)-4-hydroxy-3-methylbut-2-enyl diphosphate + oxidized [flavodoxin] + H2O + 2 H(+) = 2-C-methyl-D-erythritol 2,4-cyclic diphosphate + reduced [flavodoxin]. Its pathway is isoprenoid biosynthesis; isopentenyl diphosphate biosynthesis via DXP pathway; isopentenyl diphosphate from 1-deoxy-D-xylulose 5-phosphate: step 5/6. Converts 2C-methyl-D-erythritol 2,4-cyclodiphosphate (ME-2,4cPP) into 1-hydroxy-2-methyl-2-(E)-butenyl 4-diphosphate. This chain is 4-hydroxy-3-methylbut-2-en-1-yl diphosphate synthase (flavodoxin), found in Brevibacillus brevis (strain 47 / JCM 6285 / NBRC 100599).